The primary structure comprises 296 residues: Myeloid differentiation primary response protein MyD88 (296 aa).

The 56-residue stretch at 54 to 109 (MDFEYLEIRQLETQADPTGRLLDAWQGRPGASVGRLLELLTKLGRDDVLLELGPSI) folds into the Death domain. Residues 110–155 (EEDCQKYILKQQQEEAEKPLQVAAVDSSVPRTAELAGITTLDDPLG) are intermediate domain. The region spanning 159-293 (ERFDAFICYC…WFWTRLAKAL (135 aa)) is the TIR domain. Serine 244 bears the Phosphoserine mark.

In terms of assembly, homodimer. Also forms heterodimers with TIRAP. Binds to TLR2, TLR5, IRAK1, IRAK2 and IRAK4 via their respective TIR domains. Interacts with IL18R1. Interacts with BMX, IL1RL1, IKBKE and IRF7. Interacts with LRRFIP1 and LRRFIP2; this interaction positively regulates Toll-like receptor (TLR) signaling in response to agonist. Interacts with FLII. LRRFIP1 and LRRFIP2 compete with FLII for MYD88-binding. Interacts with IRF1. Upon IL1B treatment, forms a complex with PELI1, IRAK1, IRAK4 and TRAF6; this complex recruits MAP3K7/TAK1, TAB1 and TAB2 to mediate NF-kappa-B activation. Direct binding of SMAD6 to PELI1 prevents the complex formation and hence negatively regulates IL1R-TLR signaling and eventually NF-kappa-B-mediated gene expression. May interact with PIK3AP1. Interacts (via TIR domain) with DHX9 (via H2A and OB-fold regions); this interaction is direct. Interacts with OTUD4 deubiquitinase; the interaction is direct. Interacts with TLR4. (Microbial infection) In case of infection, interacts with uropathogenic E.coli protein TcpC; suppressing Toll-like receptor (TLR)-mediated cytokine production. As to quaternary structure, (Microbial infection) In case of infection, interacts with uropathogenic E.faecalis protein TcpF; suppressing Toll-like receptor (TLR)-mediated cytokine production. In terms of assembly, (Microbial infection) In case of infection, interacts with B.melitensis protein TcpB. (Microbial infection) Interacts with human metapneumovirus protein M2-2; this interaction prevents MYD88-mediated cytokine secretion. In terms of processing, ubiquitinated; undergoes 'Lys-63'-linked polyubiquitination. OTUD4 specifically hydrolyzes 'Lys-63'-linked polyubiquitinated MYD88. Deubiquitinated by USP3 that cleaves 'Lys-63'-linked ubiquitin chains leading to inhibition of MYD88-induced NF-kappa-B signaling. Post-translationally, (Microbial infection) Ubiquitinated by human herpesvirus 8 (KSHV) protein RTA/ORF50, leading to proteasomal degradation ans suppression of TLR4 signaling pathway. As to expression, ubiquitous.

The protein resides in the cytoplasm. It is found in the nucleus. In terms of biological role, adapter protein involved in the Toll-like receptor and IL-1 receptor signaling pathway in the innate immune response. Acts via IRAK1, IRAK2, IRF7 and TRAF6, leading to NF-kappa-B activation, cytokine secretion and the inflammatory response. Increases IL-8 transcription. Involved in IL-18-mediated signaling pathway. Activates IRF1 resulting in its rapid migration into the nucleus to mediate an efficient induction of IFN-beta, NOS2/INOS, and IL12A genes. Upon TLR8 activation by GU-rich single-stranded RNA (GU-rich RNA) derived from viruses such as SARS-CoV-2, SARS-CoV and HIV-1, induces IL1B release through NLRP3 inflammasome activation. MyD88-mediated signaling in intestinal epithelial cells is crucial for maintenance of gut homeostasis and controls the expression of the antimicrobial lectin REG3G in the small intestine. The chain is Myeloid differentiation primary response protein MyD88 from Homo sapiens (Human).